The sequence spans 334 residues: L-lactate dehydrogenase (334 aa).

The segment at 1–22 is disordered; it reads MASTKGKLIHEMVPSKERDPPH. Positions 8–22 are enriched in basic and acidic residues; sequence LIHEMVPSKERDPPH. NAD(+) is bound by residues 31–59 and Arg101; that span reads GQVG…VEDR. Substrate contacts are provided by Arg108, Asn140, and Arg171. Asn140 serves as a coordination point for NAD(+). Residue His195 is the Proton acceptor of the active site. Thr250 is a binding site for substrate.

This sequence belongs to the LDH/MDH superfamily. LDH family. In terms of assembly, homotetramer.

Its subcellular location is the cytoplasm. It catalyses the reaction (S)-lactate + NAD(+) = pyruvate + NADH + H(+). It participates in fermentation; pyruvate fermentation to lactate; (S)-lactate from pyruvate: step 1/1. The chain is L-lactate dehydrogenase from Petromyzon marinus (Sea lamprey).